The primary structure comprises 102 residues: MYAIVKTGGKQYKVAVGDVVEVEKLEGEPGSEVTFPALLLVDGSDVTADADALAKVSVTGKLVEQTKGPKIRIHKFKNKTGYHKRQGHRQKLTRVEVTGITK.

Belongs to the bacterial ribosomal protein bL21 family. As to quaternary structure, part of the 50S ribosomal subunit. Contacts protein L20.

Its function is as follows. This protein binds to 23S rRNA in the presence of protein L20. The polypeptide is Large ribosomal subunit protein bL21 (Saccharopolyspora erythraea (strain ATCC 11635 / DSM 40517 / JCM 4748 / NBRC 13426 / NCIMB 8594 / NRRL 2338)).